Consider the following 219-residue polypeptide: Large ribosomal subunit protein uL3 (219 aa).

The disordered stretch occupies residues 136–156; the sequence is GASHGAHRNHRKPGSIGGCAT.

It belongs to the universal ribosomal protein uL3 family. As to quaternary structure, part of the 50S ribosomal subunit. Forms a cluster with proteins L14 and L19.

In terms of biological role, one of the primary rRNA binding proteins, it binds directly near the 3'-end of the 23S rRNA, where it nucleates assembly of the 50S subunit. This Kineococcus radiotolerans (strain ATCC BAA-149 / DSM 14245 / SRS30216) protein is Large ribosomal subunit protein uL3.